A 146-amino-acid chain; its full sequence is Hemoglobin subunit beta (146 aa).

Residue Val1 is modified to N-acetylvaline. The 145-residue stretch at 2–146 (HLTAEEKSLV…VANALAHKYH (145 aa)) folds into the Globin domain. Phosphoserine is present on Ser44. Lys59 bears the N6-acetyllysine mark. His63 is a heme b binding site. N6-acetyllysine is present on Lys82. Residue His92 participates in heme b binding. Residue Cys93 is modified to S-nitrosocysteine. Lys144 is subject to N6-acetyllysine.

This sequence belongs to the globin family. As to quaternary structure, heterotetramer of two alpha chains and two beta chains. Red blood cells.

Its function is as follows. Involved in oxygen transport from the lung to the various peripheral tissues. The sequence is that of Hemoglobin subunit beta (HBB) from Canis latrans (Coyote).